Consider the following 1102-residue polypeptide: Probable ubiquitin-conjugating enzyme E2 23 (1102 aa).

Disordered regions lie at residues 1–20, 25–111, 396–418, 579–602, 661–710, and 760–800; these read MEHE…DSSV, ASLS…DGNY, LPKV…PVHE, SPGN…SHQE, DESV…DIYA, and QAES…KNIL. The span at 31–44 shows a compositional bias: basic and acidic residues; the sequence is DSEHPNIYRQDIVK. Acidic residues predominate over residues 59-88; it reads GDSDSDSDISDEEEDDDDDEDNDDDDEDVE. Polar residues predominate over residues 579–596; sequence SPGNSFEEATQQDNGYQD. Polar residues predominate over residues 779–800; sequence SKVNVTDNCESKGTQANAKNIL. In terms of domain architecture, UBC core spans 850–1010; that stretch reads QWFKKVDQDW…TFLLNCKTMM (161 aa). C936 serves as the catalytic Glycyl thioester intermediate.

Belongs to the ubiquitin-conjugating enzyme family.

It carries out the reaction S-ubiquitinyl-[E1 ubiquitin-activating enzyme]-L-cysteine + [E2 ubiquitin-conjugating enzyme]-L-cysteine = [E1 ubiquitin-activating enzyme]-L-cysteine + S-ubiquitinyl-[E2 ubiquitin-conjugating enzyme]-L-cysteine.. It functions in the pathway protein modification; protein ubiquitination. Functionally, accepts the ubiquitin from the E1 complex and catalyzes its covalent attachment to other proteins. The sequence is that of Probable ubiquitin-conjugating enzyme E2 23 (UBC23) from Arabidopsis thaliana (Mouse-ear cress).